A 943-amino-acid polypeptide reads, in one-letter code: MQDKLIIRGARAHNLKNIDVEIPRDKLIVMTGLSGSGKSSLAFDTIYAEGQRRYVESLSAYARQFLGNMDKPDVDSIDGLSPAISIDQKTTSKNPRSTVGTVTEINDYLRLLYARVGIPYCKNGHGAITASSVEQIVDQVLILPERTRMQILAPVVRRKKGQHKAVFDRIQKDGYVRVRIDGDIMDVAEVPELSKNKMHNIEVVVDRLVQKDGIRGRLFDSIEAALHLGDGYVIIDTMDDHELIFSEHYSCPVCGFTVPELEPRLFSFNAPFGSCPTCDGLGIKLEVDLDLVIPDENKTLREGTLAPWNPISSNYYPQLLEQAMNAFGVDMDKPWKDLSDEDKKLVLHGSGDTAFHFHYQNDFGGVRDIDIPFEGIISNISRRYHETNSDFTRNVMRSYMNELPCATCHGYRLNDQALSVRVGGKEGLNIGQVSELSIADHLSLLTHLELSENEKTIATPIVKEIKDRLTFLNNVGLNYLTLSRSAGTLSGGESQRIRLATQIGSNLSGVLYILDEPSIGLHQRDNDRLISSLKKMRDLGNTLIVVEHDEDTMMAADWLVDVGPGAGALGGEIVASGTPRQVAKNKKSITGQYLSGKKKIPVPLDRRKGSGRFIEIKGAAENNLQNINVKFPLGKFIAVTGVSGSGKSTLVNSILKKVIAQKLNRNSEKPGKYKSISGIEHIDRLIDIDQSPIGRTPRSNPATYTGVFDDIRDLFAQTNEAKIRGYKKGRFSFNVKGGRCEACSGDGIIKIEMHFLPDVYVPCEVCHGTRYNSETLEVHYKDKNIAEILNMTVNDAAEFFAPIPKIARKIRTIKDVGLGYVTLGQPATTLSGGEAQRMKLASELHKRSTGKSFYILDEPTTGLHTDDIARLLKVLERFVDDGNTVLVIEHNLDVIKTADHIIDLGPEGGVGGGQVIATGTPEQVAEMTESYTGQYLKGRLNEK.

Gly-32–Ser-39 is a binding site for ATP. A C4-type zinc finger spans residues Cys-251–Cys-278. ABC transporter domains follow at residues Trp-308–Ile-589 and Gly-609–Lys-937. Residue Gly-641 to Ser-648 coordinates ATP. Residues Cys-740–Cys-766 form a C4-type zinc finger.

It belongs to the ABC transporter superfamily. UvrA family. In terms of assembly, forms a heterotetramer with UvrB during the search for lesions.

The protein localises to the cytoplasm. In terms of biological role, the UvrABC repair system catalyzes the recognition and processing of DNA lesions. UvrA is an ATPase and a DNA-binding protein. A damage recognition complex composed of 2 UvrA and 2 UvrB subunits scans DNA for abnormalities. When the presence of a lesion has been verified by UvrB, the UvrA molecules dissociate. This chain is UvrABC system protein A, found in Streptococcus mutans serotype c (strain ATCC 700610 / UA159).